A 284-amino-acid chain; its full sequence is Probable endonuclease 4 (284 aa).

Residues H69, H109, E145, D179, H182, H216, D229, H231, and E261 each coordinate Zn(2+).

The protein belongs to the AP endonuclease 2 family. Requires Zn(2+) as cofactor.

The enzyme catalyses Endonucleolytic cleavage to 5'-phosphooligonucleotide end-products.. In terms of biological role, endonuclease IV plays a role in DNA repair. It cleaves phosphodiester bonds at apurinic or apyrimidinic (AP) sites, generating a 3'-hydroxyl group and a 5'-terminal sugar phosphate. The sequence is that of Probable endonuclease 4 from Klebsiella pneumoniae subsp. pneumoniae (strain ATCC 700721 / MGH 78578).